Reading from the N-terminus, the 409-residue chain is Tyrosine--tRNA ligase (409 aa).

The 'HIGH' region signature appears at 54-63 (PTAPDIHLGH). The 'KMSKS' region signature appears at 238 to 242 (KMSKS). ATP is bound at residue Lys-241. Residues 347-407 (QGILRILREA…GKRKFARVKL (61 aa)) form the S4 RNA-binding domain.

Belongs to the class-I aminoacyl-tRNA synthetase family. TyrS type 2 subfamily. Homodimer.

It localises to the cytoplasm. The catalysed reaction is tRNA(Tyr) + L-tyrosine + ATP = L-tyrosyl-tRNA(Tyr) + AMP + diphosphate + H(+). Catalyzes the attachment of tyrosine to tRNA(Tyr) in a two-step reaction: tyrosine is first activated by ATP to form Tyr-AMP and then transferred to the acceptor end of tRNA(Tyr). In Bordetella parapertussis (strain 12822 / ATCC BAA-587 / NCTC 13253), this protein is Tyrosine--tRNA ligase.